A 204-amino-acid chain; its full sequence is Outer-membrane lipoprotein carrier protein (204 aa).

Positions 1 to 21 are cleaved as a signal peptide; sequence MKKIAVTCALLSAFAVSSVWA. The segment at 169 to 204 is disordered; the sequence is QRSSYQLKSQQNGAVDMSKFTFTPPQGVTVDDQRNK. Over residues 171 to 181 the composition is skewed to polar residues; the sequence is SSYQLKSQQNG.

It belongs to the LolA family. As to quaternary structure, monomer.

It is found in the periplasm. In terms of biological role, participates in the translocation of lipoproteins from the inner membrane to the outer membrane. Only forms a complex with a lipoprotein if the residue after the N-terminal Cys is not an aspartate (The Asp acts as a targeting signal to indicate that the lipoprotein should stay in the inner membrane). The protein is Outer-membrane lipoprotein carrier protein of Cronobacter sakazakii (strain ATCC BAA-894) (Enterobacter sakazakii).